A 505-amino-acid polypeptide reads, in one-letter code: ATP synthase subunit alpha (505 aa).

An ATP-binding site is contributed by Gly170–Thr177.

This sequence belongs to the ATPase alpha/beta chains family. F-type ATPases have 2 components, CF(1) - the catalytic core - and CF(0) - the membrane proton channel. CF(1) has five subunits: alpha(3), beta(3), gamma(1), delta(1), epsilon(1). CF(0) has four main subunits: a(1), b(1), b'(1) and c(9-12).

It localises to the cellular thylakoid membrane. It carries out the reaction ATP + H2O + 4 H(+)(in) = ADP + phosphate + 5 H(+)(out). Its function is as follows. Produces ATP from ADP in the presence of a proton gradient across the membrane. The alpha chain is a regulatory subunit. In Prochlorococcus marinus subsp. pastoris (strain CCMP1986 / NIES-2087 / MED4), this protein is ATP synthase subunit alpha.